Here is a 303-residue protein sequence, read N- to C-terminus: Acetaldehyde dehydrogenase (303 aa).

The Acyl-thioester intermediate role is filled by C130. NAD(+)-binding positions include 161 to 169 (SVGPGTRKN) and N272.

This sequence belongs to the acetaldehyde dehydrogenase family.

It catalyses the reaction acetaldehyde + NAD(+) + CoA = acetyl-CoA + NADH + H(+). The polypeptide is Acetaldehyde dehydrogenase (Verminephrobacter eiseniae (strain EF01-2)).